The following is a 166-amino-acid chain: Transcription factor HES-5 (166 aa).

The bHLH domain maps to lysine 16–serine 72. Residues tyrosine 88–phenylalanine 119 enclose the Orange domain. Residues proline 125–tryptophan 166 are disordered. Positions alanine 142–arginine 156 are enriched in low complexity. The short motif at tryptophan 163–tryptophan 166 is the WRPW motif element.

As to quaternary structure, transcription repression requires formation of a complex with a corepressor protein of the Groucho/TLE family. Expressed predominantly in embryonic neural lineage cells.

The protein localises to the nucleus. Transcriptional repressor of genes that require a bHLH protein for their transcription. Plays an important role as neurogenesis negative regulator. This is Transcription factor HES-5 (Hes5) from Rattus norvegicus (Rat).